The primary structure comprises 312 residues: Carbonic anhydrase 4 (312 aa).

Positions 1–18 (MRLLLALLVLAAAPPQAR) are cleaved as a signal peptide. The Alpha-carbonic anhydrase domain occupies 21–285 (SHWCYQIQVK…LGQRQVFRSG (265 aa)). 2 cysteine pairs are disulfide-bonded: cysteine 24-cysteine 36 and cysteine 46-cysteine 229. Asparagine 33 is a glycosylation site (N-linked (GlcNAc...) asparagine). Histidine 88 serves as the catalytic Proton donor/acceptor. Residues histidine 115, histidine 117, and histidine 140 each contribute to the Zn(2+) site. 2 N-linked (GlcNAc...) asparagine glycosylation sites follow: asparagine 152 and asparagine 195. 225 to 226 (TT) lines the substrate pocket. Asparagine 265 carries N-linked (GlcNAc...) asparagine glycosylation. A lipid anchor (GPI-anchor amidated serine) is attached at serine 284. Positions 285–312 (GAPGLLLAQPLPTLLAPVLACLTVGFLR) are cleaved as a propeptide — removed in mature form.

The protein belongs to the alpha-carbonic anhydrase family. Interacts with SLC4A4. Zn(2+) is required as a cofactor.

It is found in the cell membrane. The catalysed reaction is hydrogencarbonate + H(+) = CO2 + H2O. Its activity is regulated as follows. Inhibited by acetazolamide. Catalyzes the reversible hydration of carbon dioxide into bicarbonate and protons and thus is essential to maintaining intracellular and extracellular pH. May stimulate the sodium/bicarbonate transporter activity of SLC4A4 that acts in pH homeostasis. It is essential for acid overload removal from the retina and retina epithelium, and acid release in the choriocapillaris in the choroid. In Bos taurus (Bovine), this protein is Carbonic anhydrase 4 (CA4).